The primary structure comprises 238 residues: UDP-2,3-diacylglucosamine hydrolase (238 aa).

Residues Asp-8, His-10, Asp-41, Asn-78, and His-113 each contribute to the Mn(2+) site. 78 to 79 serves as a coordination point for substrate; the sequence is NR. Substrate is bound by residues Asp-121, Ser-159, Asn-163, Lys-166, and His-194. 2 residues coordinate Mn(2+): His-194 and His-196.

The protein belongs to the LpxH family. Mn(2+) serves as cofactor.

It localises to the cell inner membrane. The catalysed reaction is UDP-2-N,3-O-bis[(3R)-3-hydroxytetradecanoyl]-alpha-D-glucosamine + H2O = 2-N,3-O-bis[(3R)-3-hydroxytetradecanoyl]-alpha-D-glucosaminyl 1-phosphate + UMP + 2 H(+). Its pathway is glycolipid biosynthesis; lipid IV(A) biosynthesis; lipid IV(A) from (3R)-3-hydroxytetradecanoyl-[acyl-carrier-protein] and UDP-N-acetyl-alpha-D-glucosamine: step 4/6. In terms of biological role, hydrolyzes the pyrophosphate bond of UDP-2,3-diacylglucosamine to yield 2,3-diacylglucosamine 1-phosphate (lipid X) and UMP by catalyzing the attack of water at the alpha-P atom. Involved in the biosynthesis of lipid A, a phosphorylated glycolipid that anchors the lipopolysaccharide to the outer membrane of the cell. The sequence is that of UDP-2,3-diacylglucosamine hydrolase from Shewanella pealeana (strain ATCC 700345 / ANG-SQ1).